A 210-amino-acid chain; its full sequence is MEHHKTYHAKELQTEKGSVLIEGPISPEKLAEYEFHDELTAFRPSQKQHEALIEIAGLPEGRIIIARFRQTIVGYVTYVYPDPLERWSEGNMENLIELGAIEVIPAFRGHSVGKTLLAVSMMDPQMEKYIIITTEYYWHWDLKGTNKDVWEYRKMMEKMMNAGGLVWFATDDPEISSHPANCLMARIGKEVSQESIERFDRLRFHNRFMY.

The N-acetyltransferase domain occupies 19–189; the sequence is VLIEGPISPE…ANCLMARIGK (171 aa).

It belongs to the acetyltransferase family. Monomer.

It participates in ketone degradation; acetoin degradation. Functionally, part of the acuABC operon, which is possibly involved in the breakdown of acetoin and butanediol. Acts as an acetyltransferase inactivating acetyl-CoA synthetase AcsA via acetylation at a Lys residue. The sequence is that of Acetoin utilization protein AcuA from Bacillus licheniformis (strain ATCC 14580 / DSM 13 / JCM 2505 / CCUG 7422 / NBRC 12200 / NCIMB 9375 / NCTC 10341 / NRRL NRS-1264 / Gibson 46).